We begin with the raw amino-acid sequence, 126 residues long: Aspartate 1-decarboxylase (126 aa).

Ser25 acts as the Schiff-base intermediate with substrate; via pyruvic acid in catalysis. A Pyruvic acid (Ser) modification is found at Ser25. Position 57 (Thr57) interacts with substrate. Tyr58 acts as the Proton donor in catalysis. 73–75 contributes to the substrate binding site; that stretch reads GGA.

This sequence belongs to the PanD family. As to quaternary structure, heterooctamer of four alpha and four beta subunits. Pyruvate serves as cofactor. In terms of processing, is synthesized initially as an inactive proenzyme, which is activated by self-cleavage at a specific serine bond to produce a beta-subunit with a hydroxyl group at its C-terminus and an alpha-subunit with a pyruvoyl group at its N-terminus.

The protein localises to the cytoplasm. It catalyses the reaction L-aspartate + H(+) = beta-alanine + CO2. It participates in cofactor biosynthesis; (R)-pantothenate biosynthesis; beta-alanine from L-aspartate: step 1/1. In terms of biological role, catalyzes the pyruvoyl-dependent decarboxylation of aspartate to produce beta-alanine. This chain is Aspartate 1-decarboxylase, found in Xylella fastidiosa (strain Temecula1 / ATCC 700964).